The primary structure comprises 127 residues: Aspartate 1-decarboxylase (127 aa).

Ser-25 (schiff-base intermediate with substrate; via pyruvic acid) is an active-site residue. The residue at position 25 (Ser-25) is a Pyruvic acid (Ser). Thr-57 serves as a coordination point for substrate. The Proton donor role is filled by Tyr-58. Position 73-75 (73-75 (GAA)) interacts with substrate.

It belongs to the PanD family. As to quaternary structure, heterooctamer of four alpha and four beta subunits. The cofactor is pyruvate. Post-translationally, is synthesized initially as an inactive proenzyme, which is activated by self-cleavage at a specific serine bond to produce a beta-subunit with a hydroxyl group at its C-terminus and an alpha-subunit with a pyruvoyl group at its N-terminus.

It is found in the cytoplasm. It catalyses the reaction L-aspartate + H(+) = beta-alanine + CO2. The protein operates within cofactor biosynthesis; (R)-pantothenate biosynthesis; beta-alanine from L-aspartate: step 1/1. In terms of biological role, catalyzes the pyruvoyl-dependent decarboxylation of aspartate to produce beta-alanine. This Neisseria meningitidis serogroup C / serotype 2a (strain ATCC 700532 / DSM 15464 / FAM18) protein is Aspartate 1-decarboxylase.